We begin with the raw amino-acid sequence, 92 residues long: Costars family protein ST45-2 (92 aa).

N-acetylmethionine is present on methionine 1.

This sequence belongs to the costars family.

This is Costars family protein ST45-2 from Eutrema halophilum (Salt cress).